The sequence spans 150 residues: Large ribosomal subunit protein bL9 (150 aa).

The protein belongs to the bacterial ribosomal protein bL9 family.

In terms of biological role, binds to the 23S rRNA. The chain is Large ribosomal subunit protein bL9 from Vibrio parahaemolyticus serotype O3:K6 (strain RIMD 2210633).